A 349-amino-acid polypeptide reads, in one-letter code: Beta-hexosaminidase (349 aa).

Residues Asp64, Arg72, Arg138, and 168 to 169 (KH) contribute to the substrate site. The Proton donor/acceptor role is filled by His181. Asp252 functions as the Nucleophile in the catalytic mechanism.

This sequence belongs to the glycosyl hydrolase 3 family. NagZ subfamily.

It localises to the cytoplasm. The catalysed reaction is Hydrolysis of terminal non-reducing N-acetyl-D-hexosamine residues in N-acetyl-beta-D-hexosaminides.. It functions in the pathway cell wall biogenesis; peptidoglycan recycling. Functionally, plays a role in peptidoglycan recycling by cleaving the terminal beta-1,4-linked N-acetylglucosamine (GlcNAc) from peptide-linked peptidoglycan fragments, giving rise to free GlcNAc, anhydro-N-acetylmuramic acid and anhydro-N-acetylmuramic acid-linked peptides. The chain is Beta-hexosaminidase from Methylobacillus flagellatus (strain ATCC 51484 / DSM 6875 / VKM B-1610 / KT).